A 419-amino-acid polypeptide reads, in one-letter code: Tyrosine--tRNA ligase (419 aa).

An L-tyrosine-binding site is contributed by Tyr34. The short motif at 39 to 48 (PTADSLHLGN) is the 'HIGH' region element. Residues Tyr169 and Gln173 each contribute to the L-tyrosine site. Positions 229 to 233 (KFGKS) match the 'KMSKS' region motif. Lys232 contacts ATP. In terms of domain architecture, S4 RNA-binding spans 353-419 (LTLVELLISA…GKKKNFVLTY (67 aa)).

Belongs to the class-I aminoacyl-tRNA synthetase family. TyrS type 1 subfamily. As to quaternary structure, homodimer.

It is found in the cytoplasm. The enzyme catalyses tRNA(Tyr) + L-tyrosine + ATP = L-tyrosyl-tRNA(Tyr) + AMP + diphosphate + H(+). Its function is as follows. Catalyzes the attachment of tyrosine to tRNA(Tyr) in a two-step reaction: tyrosine is first activated by ATP to form Tyr-AMP and then transferred to the acceptor end of tRNA(Tyr). The polypeptide is Tyrosine--tRNA ligase (Lactococcus lactis subsp. lactis (strain IL1403) (Streptococcus lactis)).